The primary structure comprises 732 residues: 1,4-alpha-glucan branching enzyme GlgB (732 aa).

Aspartate 409 (nucleophile) is an active-site residue. Catalysis depends on glutamate 462, which acts as the Proton donor.

Belongs to the glycosyl hydrolase 13 family. GlgB subfamily. As to quaternary structure, monomer.

It carries out the reaction Transfers a segment of a (1-&gt;4)-alpha-D-glucan chain to a primary hydroxy group in a similar glucan chain.. The protein operates within glycan biosynthesis; glycogen biosynthesis. Functionally, catalyzes the formation of the alpha-1,6-glucosidic linkages in glycogen by scission of a 1,4-alpha-linked oligosaccharide from growing alpha-1,4-glucan chains and the subsequent attachment of the oligosaccharide to the alpha-1,6 position. The protein is 1,4-alpha-glucan branching enzyme GlgB of Corynebacterium diphtheriae (strain ATCC 700971 / NCTC 13129 / Biotype gravis).